Here is a 227-residue protein sequence, read N- to C-terminus: UPF0173 metal-dependent hydrolase BPUM_2573 (227 aa).

It belongs to the UPF0173 family.

This is UPF0173 metal-dependent hydrolase BPUM_2573 from Bacillus pumilus (strain SAFR-032).